The chain runs to 368 residues: MNVLRSGLVTMLLLAAFSVQAACTWPAWEQFKKDYISQEGRVIDPSDARKITTSEGQSYGMFFALAANDRAAFDNILDWTQNNLAQGSLKERLPAWLWGKKENSKWEVLDSNSASDGDVWMAWSLLEAGRLWKEQRYTDIGSALLKRIAREEVVTVPGLGSMLLPGKVGFAEDNSWRFNPSYLPPTLAQYFTRFGAPWTTLRETNQRLLLETAPKGFSPDWVRYEKDKGWQLKAEKTLISSYDAIRVYMWVGMMPDSDPQKARMLNRFKPMATFTEKNGYPPEKVDVATGKAQGKGPVGFSAAMLPFLQNRDAQAVQRQRVADNFPGSDAYYNYVLTLFGQGWDQHRFRFSTKGELLPDWGQECANSH.

Residues 1–21 form the signal peptide; the sequence is MNVLRSGLVTMLLLAAFSVQA. Glutamate 55 (proton donor) is an active-site residue. Aspartate 116 serves as the catalytic Nucleophile.

This sequence belongs to the glycosyl hydrolase 8 (cellulase D) family.

It localises to the secreted. The catalysed reaction is Endohydrolysis of (1-&gt;4)-beta-D-glucosidic linkages in cellulose, lichenin and cereal beta-D-glucans.. It participates in glycan metabolism; bacterial cellulose biosynthesis. Hydrolyzes carboxymethylcellulose. The chain is Endoglucanase (bcsZ) from Escherichia coli O157:H7.